The sequence spans 134 residues: Large ribosomal subunit protein uL16c (134 aa).

The protein belongs to the universal ribosomal protein uL16 family. In terms of assembly, part of the 50S ribosomal subunit.

It is found in the plastid. Its subcellular location is the chloroplast. This Nephroselmis olivacea (Green alga) protein is Large ribosomal subunit protein uL16c.